Here is a 94-residue protein sequence, read N- to C-terminus: Neutrophil defensin 1 (94 aa).

Residues 1–19 (MRTLAILAAILLVALQAQA) form the signal peptide. A propeptide spanning residues 20–64 (EPLQARADEVAAAPEQIPADNPEVVVSLAWDESLAPKHPGSRKNV) is cleaved from the precursor. 3 disulfides stabilise this stretch: cysteine 66-cysteine 94, cysteine 68-cysteine 83, and cysteine 73-cysteine 93. Arginine 78 is subject to ADP-ribosylarginine; by ART1. A Phosphotyrosine modification is found at tyrosine 85. Arginine 88 bears the ADP-ribosylarginine; by ART1 mark.

It belongs to the alpha-defensin family. Tetramer. Dimer. Interacts with RETN. In terms of processing, ADP-ribosylation drastically reduces cytotoxic and antibacterial activities, and enhances IL8 production.

Its subcellular location is the secreted. Effector molecule of the innate immune system that acts via antibiotic-like properties against a broad array of infectious agents including bacteria, fungi, and viruses or by promoting the activation and maturation of some APCs. Interacts with the essential precursor of cell wall synthesis lipid II to inhibit bacterial cell wall synthesis. Inhibits adenovirus infection via inhibition of viral disassembly at the vertex region, thereby restricting the release of internal capsid protein pVI, which is required for endosomal membrane penetration during cell entry. In addition, interaction with adenovirus capsid leads to the redirection of viral particles to TLR4 thereby promoting a NLRP3-mediated inflammasome response and interleukin 1-beta (IL-1beta) release. Induces the production of proinflammatory cytokines including type I interferon (IFN) in plasmacytoid dendritic cells (pDCs) by triggering the degradation of NFKBIA and nuclear translocation of IRF1, both of which are required for activation of pDCs. In Pan troglodytes (Chimpanzee), this protein is Neutrophil defensin 1 (DEFA1).